The following is a 306-amino-acid chain: Ribosomal RNA small subunit methyltransferase H (306 aa).

S-adenosyl-L-methionine-binding positions include 37–39 (GGH), Asp-56, Asp-102, and Gln-109.

This sequence belongs to the methyltransferase superfamily. RsmH family.

The protein resides in the cytoplasm. It carries out the reaction cytidine(1402) in 16S rRNA + S-adenosyl-L-methionine = N(4)-methylcytidine(1402) in 16S rRNA + S-adenosyl-L-homocysteine + H(+). Its function is as follows. Specifically methylates the N4 position of cytidine in position 1402 (C1402) of 16S rRNA. The sequence is that of Ribosomal RNA small subunit methyltransferase H from Nautilia profundicola (strain ATCC BAA-1463 / DSM 18972 / AmH).